The primary structure comprises 192 residues: Adenylate kinase (192 aa).

Residue 10 to 15 (GAGKGT) coordinates ATP. The tract at residues 30–59 (STGDMLRAAVAQATEVGKRAKAVMDAGQLV) is NMP. AMP is bound by residues Thr31, Arg36, 57–59 (QLV), 85–88 (GYPR), and Gln92. Positions 126-142 (NRVAETVAAGGTVRSDD) are LID. Arg127 is an ATP binding site. AMP-binding residues include Arg139 and Arg150. ATP is bound at residue Ala178.

This sequence belongs to the adenylate kinase family. In terms of assembly, monomer.

Its subcellular location is the cytoplasm. The enzyme catalyses AMP + ATP = 2 ADP. The protein operates within purine metabolism; AMP biosynthesis via salvage pathway; AMP from ADP: step 1/1. In terms of biological role, catalyzes the reversible transfer of the terminal phosphate group between ATP and AMP. Plays an important role in cellular energy homeostasis and in adenine nucleotide metabolism. The chain is Adenylate kinase from Sinorhizobium medicae (strain WSM419) (Ensifer medicae).